The chain runs to 131 residues: MPTFSQLVRKGRTAPRYKTASPALQGSPQRRGVCTRVYTQTPKKPNSALRKVARVRLTNGIEVTTYIPGIGHNLQEHSIVLIRGGRVKDLPGVRYHVVRGTLDSVGVANRKQGRSKYGAKRAKGGAAAGKK.

The segment at 1–32 is disordered; that stretch reads MPTFSQLVRKGRTAPRYKTASPALQGSPQRRG. Residue Asp89 is modified to 3-methylthioaspartic acid. Positions 110–131 are disordered; sequence RKQGRSKYGAKRAKGGAAAGKK. Residues 111 to 131 show a composition bias toward basic residues; that stretch reads KQGRSKYGAKRAKGGAAAGKK.

It belongs to the universal ribosomal protein uS12 family. In terms of assembly, part of the 30S ribosomal subunit. Contacts proteins S8 and S17. May interact with IF1 in the 30S initiation complex.

In terms of biological role, with S4 and S5 plays an important role in translational accuracy. Interacts with and stabilizes bases of the 16S rRNA that are involved in tRNA selection in the A site and with the mRNA backbone. Located at the interface of the 30S and 50S subunits, it traverses the body of the 30S subunit contacting proteins on the other side and probably holding the rRNA structure together. The combined cluster of proteins S8, S12 and S17 appears to hold together the shoulder and platform of the 30S subunit. This is Small ribosomal subunit protein uS12 from Acidobacterium capsulatum (strain ATCC 51196 / DSM 11244 / BCRC 80197 / JCM 7670 / NBRC 15755 / NCIMB 13165 / 161).